Reading from the N-terminus, the 617-residue chain is Probable Xaa-Pro aminopeptidase P (617 aa).

Mn(2+)-binding residues include Asp-414, Asp-425, Glu-523, and Glu-537.

Belongs to the peptidase M24B family. Mn(2+) serves as cofactor.

It carries out the reaction Release of any N-terminal amino acid, including proline, that is linked to proline, even from a dipeptide or tripeptide.. Catalyzes the removal of a penultimate prolyl residue from the N-termini of peptides. The polypeptide is Probable Xaa-Pro aminopeptidase P (AMPP) (Colletotrichum graminicola (strain M1.001 / M2 / FGSC 10212) (Maize anthracnose fungus)).